Consider the following 573-residue polypeptide: SHC-transforming protein 2 (573 aa).

The region spanning 125–309 is the PID domain; the sequence is LGPGVSYIVR…LEELAWGDDD (185 aa). Residues 310–477 form a CH1 region; it reads AAADHNYYNS…PTEEQLRQEP (168 aa). Y316, Y317, and Y395 each carry phosphotyrosine. An SH2 domain is found at 478-569; it reads WYHGRMSRRA…ESELHLRGVV (92 aa).

As to quaternary structure, interacts with the Trk receptors in a phosphotyrosine-dependent manner and MEGF12. Once activated, binds to GRB2. In terms of processing, phosphorylated on tyrosine by the Trk receptors. In terms of tissue distribution, expressed in brain. Expressed at high level in the hypothalamus and at low level in the caudate nucleus.

Signaling adapter that couples activated growth factor receptors to signaling pathway in neurons. Involved in the signal transduction pathways of neurotrophin-activated Trk receptors in cortical neurons. The sequence is that of SHC-transforming protein 2 (Shc2) from Mus musculus (Mouse).